Reading from the N-terminus, the 35-residue chain is Augerpeptide hheTx5 (35 aa).

Post-translationally, contains 4 disulfide bonds. In terms of tissue distribution, expressed by the venom duct.

It localises to the secreted. The protein is Augerpeptide hheTx5 of Hastula hectica (Sea snail).